The primary structure comprises 230 residues: Somatolactin (230 aa).

The signal sequence occupies residues 1-23 (MNMMTVKQGVWAALLWPYLLAAS). Intrachain disulfides connect Cys28-Cys38, Cys88-Cys204, and Cys221-Cys229. Residues Asn137 and Asn144 are each glycosylated (N-linked (GlcNAc...) asparagine).

Belongs to the somatotropin/prolactin family.

It is found in the secreted. In Hippoglossus hippoglossus (Atlantic halibut), this protein is Somatolactin.